The sequence spans 862 residues: DNA topoisomerase 3-beta-1 (862 aa).

The region spanning 3–153 is the Toprim domain; the sequence is TVLMVAEKPS…EKTVFRARFS (151 aa). Residues 171-593 enclose the Topo IA-type catalytic domain; the sequence is DHNEALSVDA…HTLDVFKRKF (423 aa). Residue tyrosine 336 is the O-(5'-phospho-DNA)-tyrosine intermediate of the active site. The segment covering 821–851 has biased composition (basic residues); the sequence is PMHRGGPGRRQGRGRGRARRPPGKPNPRRPK. The tract at residues 821 to 854 is disordered; sequence PMHRGGPGRRQGRGRGRARRPPGKPNPRRPKDKM.

Belongs to the type IA topoisomerase family. As to expression, isoform 1 is found in testis, heart and skeletal muscle. A 4 kb transcript which probably represents isoform 2 is found in thymus, kidney and pancreas.

It catalyses the reaction ATP-independent breakage of single-stranded DNA, followed by passage and rejoining.. Functionally, releases the supercoiling and torsional tension of DNA introduced during the DNA replication and transcription by transiently cleaving and rejoining one strand of the DNA duplex. Introduces a single-strand break via transesterification at a target site in duplex DNA. The scissile phosphodiester is attacked by the catalytic tyrosine of the enzyme, resulting in the formation of a DNA-(5'-phosphotyrosyl)-enzyme intermediate and the expulsion of a 3'-OH DNA strand. The free DNA strand than undergoes passage around the unbroken strand thus removing DNA supercoils. Finally, in the religation step, the DNA 3'-OH attacks the covalent intermediate to expel the active-site tyrosine and restore the DNA phosphodiester backbone. Possesses negatively supercoiled DNA relaxing activity. This Homo sapiens (Human) protein is DNA topoisomerase 3-beta-1 (TOP3B).